Consider the following 358-residue polypeptide: Trace amine-associated receptor 7a (358 aa).

Residues 1–47 (MDKLVDNFLSGQSRTMSEDLLSASSPQLCYENLNGSCIRSPYSPGPR) lie on the Extracellular side of the membrane. An N-linked (GlcNAc...) asparagine glycan is attached at asparagine 34. Cystine bridges form between cysteine 37–cysteine 201 and cysteine 120–cysteine 205. A helical transmembrane segment spans residues 48-68 (LILYAVFGFGAVLAVCGNLLV). Over 69 to 83 (MTSILHFRQLHSPAN) the chain is Cytoplasmic. A helical membrane pass occupies residues 84–104 (FLVASLACADFLVGLTVMPFS). Residues 105 to 121 (TVRSVEGCWYFGDTYCK) lie on the Extracellular side of the membrane. The helical transmembrane segment at 122-143 (FHSCFEGSFCYSSIFHLCFISV) threads the bilayer. Topologically, residues 144–166 (DRYIAVSDPLIYPTRFTASVSGK) are cytoplasmic. A helical transmembrane segment spans residues 167–187 (CITFSWLLSIIYSFSLLYTGA). The Extracellular portion of the chain corresponds to 188 to 212 (NEAGLEDLVSALTCVGGCQIAVNQS). Residue asparagine 210 is glycosylated (N-linked (GlcNAc...) asparagine). Residues 213 to 233 (WVFINFLLFLVPTLVMMTVYS) traverse the membrane as a helical segment. Over 234–274 (KIFLIAKQQAQNIEKMSKQTTRASESYKDRVAKRERKAAKT) the chain is Cytoplasmic. The helical transmembrane segment at 275–295 (LGIAVAAFLLSWLPYFIDSII) threads the bilayer. Residues 296–309 (DAFLGFITPTYVYE) are Extracellular-facing. A helical transmembrane segment spans residues 310–333 (ILVWIAYYNSAMNPLIYAFFYPWF). At 334–358 (RKAIKLIVTGKILRQNSSVTNLFPE) the chain is on the cytoplasmic side.

The protein belongs to the G-protein coupled receptor 1 family.

It is found in the cell membrane. Functionally, olfactory receptor specific for N,N-dimethylalkylamines trace amines. Trace amine compounds are enriched in animal body fluids and act on trace amine-associated receptors (TAARs) to elicit both intraspecific and interspecific innate behaviors. Ligand-binding causes a conformation change that triggers signaling via G(s)-class of G alpha proteins (GNAL or GNAS). The protein is Trace amine-associated receptor 7a of Rattus norvegicus (Rat).